Here is a 769-residue protein sequence, read N- to C-terminus: Polyribonucleotide nucleotidyltransferase (769 aa).

Positions 490 and 496 each coordinate Mg(2+). One can recognise a KH domain in the interval 557–616; sequence PKIDTIMIPVDKIKVVIGKGGEQIDKIIAETGVKIDIDDEGLCSIFSSDQSAIDRAKEII. The region spanning 626–694 is the S1 motif domain; the sequence is GEVYEAKVVR…DKGRVDASMR (69 aa). Residues 700–734 show a composition bias toward basic and acidic residues; that stretch reads PEGYVEPERKPRERRDNKDRRNGNGFDRRNNDRNN. Residues 700-769 form a disordered region; that stretch reads PEGYVEPERK…FPELSTKKPE (70 aa). Low complexity predominate over residues 736-746; sequence NNHNNNSGNHS. The span at 747–769 shows a compositional bias: basic and acidic residues; that stretch reads FELRERKSHVDHEFPELSTKKPE.

The protein belongs to the polyribonucleotide nucleotidyltransferase family. The cofactor is Mg(2+).

The protein resides in the cytoplasm. The catalysed reaction is RNA(n+1) + phosphate = RNA(n) + a ribonucleoside 5'-diphosphate. Functionally, involved in mRNA degradation. Catalyzes the phosphorolysis of single-stranded polyribonucleotides processively in the 3'- to 5'-direction. The protein is Polyribonucleotide nucleotidyltransferase of Lactococcus lactis subsp. cremoris (strain SK11).